The following is a 65-amino-acid chain: Large ribosomal subunit protein bL35 (65 aa).

The protein belongs to the bacterial ribosomal protein bL35 family.

The chain is Large ribosomal subunit protein bL35 from Yersinia pseudotuberculosis serotype O:1b (strain IP 31758).